Consider the following 239-residue polypeptide: Cysteine-rich venom protein kaouthin-1 (239 aa).

An N-terminal signal peptide occupies residues 1–18 (MIAFSLLCLAAVLRQSFG). Residues 37–165 (VDLHNSLRRR…AWSYFYVCQY (129 aa)) enclose the SCP domain. Intrachain disulfides connect Cys74–Cys152, Cys91–Cys166, Cys147–Cys163, Cys185–Cys192, Cys188–Cys197, Cys201–Cys234, Cys210–Cys228, and Cys219–Cys232. A ShKT domain is found at 201 to 234 (CTIYNKLTNCDSLLKQGSCQDDWIKSNCPASCFC).

The protein belongs to the CRISP family. Expressed by the venom gland.

It is found in the secreted. Its function is as follows. Inhibits calcium-activated potassium channels (KCa), voltage-gated potassium channel (Kv), and the calcium release channel/ryanodine receptor (RyR). The protein is Cysteine-rich venom protein kaouthin-1 of Naja kaouthia (Monocled cobra).